Consider the following 240-residue polypeptide: Probable transcriptional regulatory protein MADE_1004275 (240 aa).

This sequence belongs to the TACO1 family.

The protein resides in the cytoplasm. The chain is Probable transcriptional regulatory protein MADE_1004275 from Alteromonas mediterranea (strain DSM 17117 / CIP 110805 / LMG 28347 / Deep ecotype).